Consider the following 264-residue polypeptide: ATP synthase subunit a (264 aa).

6 helical membrane passes run 29-49 (TWHI…LWIF), 90-110 (IAPL…MDMI), 134-154 (DVNI…YYSI), 177-197 (IPVN…SLAL), 208-228 (LIFI…SLGV), and 235-255 (LIFH…LTIV).

The protein belongs to the ATPase A chain family. In terms of assembly, F-type ATPases have 2 components, CF(1) - the catalytic core - and CF(0) - the membrane proton channel. CF(1) has five subunits: alpha(3), beta(3), gamma(1), delta(1), epsilon(1). CF(0) has three main subunits: a(1), b(2) and c(9-12). The alpha and beta chains form an alternating ring which encloses part of the gamma chain. CF(1) is attached to CF(0) by a central stalk formed by the gamma and epsilon chains, while a peripheral stalk is formed by the delta and b chains.

The protein localises to the cell inner membrane. Functionally, key component of the proton channel; it plays a direct role in the translocation of protons across the membrane. This is ATP synthase subunit a from Shewanella oneidensis (strain ATCC 700550 / JCM 31522 / CIP 106686 / LMG 19005 / NCIMB 14063 / MR-1).